Consider the following 112-residue polypeptide: Hydrogenase maturation factor HypA (112 aa).

His2 contributes to the Ni(2+) binding site. Cys72, Cys75, Cys88, and Cys91 together coordinate Zn(2+).

It belongs to the HypA/HybF family.

Involved in the maturation of [NiFe] hydrogenases. Required for nickel insertion into the metal center of the hydrogenase. The protein is Hydrogenase maturation factor HypA of Francisella philomiragia subsp. philomiragia (strain ATCC 25017 / CCUG 19701 / FSC 153 / O#319-036).